The chain runs to 181 residues: Glucose-1-phosphate adenylyltransferase large subunit 2 (181 aa).

Belongs to the bacterial/plant glucose-1-phosphate adenylyltransferase family. As to quaternary structure, heterotetramer. As to expression, leaves.

It is found in the plastid. The protein resides in the chloroplast. The protein localises to the amyloplast. It carries out the reaction alpha-D-glucose 1-phosphate + ATP + H(+) = ADP-alpha-D-glucose + diphosphate. It functions in the pathway glycan biosynthesis; starch biosynthesis. Highly active without 3'phosphoglycerate, and is only slightly affected by the activator 3'phosphoglycerate and inhibitor orthophosphate. This protein plays a role in synthesis of starch. It catalyzes the synthesis of the activated glycosyl donor, ADP-glucose from Glc-1-P and ATP. The polypeptide is Glucose-1-phosphate adenylyltransferase large subunit 2 (Hordeum vulgare (Barley)).